Reading from the N-terminus, the 479-residue chain is Flap endonuclease 1 (479 aa).

Residues 1-106 (MGIKGLTKFI…SELEKRGEKR (106 aa)) are N-domain. Position 34 (Asp34) interacts with Mg(2+). Residues Arg47 and Arg72 each coordinate DNA. The Mg(2+) site is built by Asp88, Glu160, Glu162, Asp181, and Asp183. The segment at 124-266 (EIKKQSGRTV…KTAYNLIKEY (143 aa)) is I-domain. Glu160 is a binding site for DNA. Residues Gly244 and Asp246 each contribute to the DNA site. Asp246 lines the Mg(2+) pocket. Positions 349–357 (TQRRLDTFF) are interaction with PCNA. Residues 379 to 455 (AKGKGKKREL…NSDSGNIKNE (77 aa)) are disordered. Over residues 403 to 428 (NIKDEKKNTDKMDELKNKSDENFVKD) the composition is skewed to basic and acidic residues.

Belongs to the XPG/RAD2 endonuclease family. FEN1 subfamily. As to quaternary structure, interacts with PCNA. Three molecules of FEN1 bind to one PCNA trimer with each molecule binding to one PCNA monomer. PCNA stimulates the nuclease activity without altering cleavage specificity. It depends on Mg(2+) as a cofactor. Post-translationally, phosphorylated. Phosphorylation upon DNA damage induces relocalization to the nuclear plasma.

The protein resides in the nucleus. Its subcellular location is the nucleolus. It localises to the nucleoplasm. The protein localises to the mitochondrion. Its function is as follows. Structure-specific nuclease with 5'-flap endonuclease and 5'-3' exonuclease activities involved in DNA replication and repair. During DNA replication, cleaves the 5'-overhanging flap structure that is generated by displacement synthesis when DNA polymerase encounters the 5'-end of a downstream Okazaki fragment. It enters the flap from the 5'-end and then tracks to cleave the flap base, leaving a nick for ligation. Also involved in the long patch base excision repair (LP-BER) pathway, by cleaving within the apurinic/apyrimidinic (AP) site-terminated flap. Acts as a genome stabilization factor that prevents flaps from equilibrating into structures that lead to duplications and deletions. Also possesses 5'-3' exonuclease activity on nicked or gapped double-stranded DNA, and exhibits RNase H activity. Also involved in replication and repair of rDNA and in repairing mitochondrial DNA. The sequence is that of Flap endonuclease 1 from Plasmodium chabaudi chabaudi.